The chain runs to 910 residues: DNA mismatch repair protein MutS (910 aa).

The span at 1–11 shows a compositional bias: basic and acidic residues; it reads MEAKVEEKEPE. The disordered stretch occupies residues 1 to 21; sequence MEAKVEEKEPEPVENAGPDAP. 658-665 serves as a coordination point for ATP; it reads GPNMGGKS.

It belongs to the DNA mismatch repair MutS family.

Its function is as follows. This protein is involved in the repair of mismatches in DNA. It is possible that it carries out the mismatch recognition step. This protein has a weak ATPase activity. The chain is DNA mismatch repair protein MutS from Brucella melitensis biotype 1 (strain ATCC 23456 / CCUG 17765 / NCTC 10094 / 16M).